A 286-amino-acid polypeptide reads, in one-letter code: Polyamine aminopropyltransferase (286 aa).

Positions K5–D238 constitute a PABS domain. The spermidine site is built by H64 and D88. Residues E108 and N140 to G141 each bind S-methyl-5'-thioadenosine. The active-site Proton acceptor is D158. Residue D158–D161 coordinates spermidine.

The protein belongs to the spermidine/spermine synthase family. In terms of assembly, homodimer or homotetramer.

It is found in the cytoplasm. The catalysed reaction is S-adenosyl 3-(methylsulfanyl)propylamine + putrescine = S-methyl-5'-thioadenosine + spermidine + H(+). It participates in amine and polyamine biosynthesis; spermidine biosynthesis; spermidine from putrescine: step 1/1. Its function is as follows. Catalyzes the irreversible transfer of a propylamine group from the amino donor S-adenosylmethioninamine (decarboxy-AdoMet) to putrescine (1,4-diaminobutane) to yield spermidine. The polypeptide is Polyamine aminopropyltransferase (Buchnera aphidicola subsp. Schizaphis graminum (strain Sg)).